The sequence spans 238 residues: Survival of motor neuron-related-splicing factor 30 (238 aa).

The region spanning serine 72–lysine 132 is the Tudor domain. Residues lysine 142–lysine 160 carry the Nuclear localization signal motif. At serine 201 the chain carries Phosphoserine. The residue at position 219 (lysine 219) is an N6-acetyllysine.

The protein belongs to the SMN family. As to quaternary structure, associates with spliceosomes. Associates with U4/U5/U6 tri-snRNP and with U2 snRNP.

Its subcellular location is the nucleus speckle. The protein localises to the nucleus. It is found in the cajal body. In terms of biological role, involved in spliceosome assembly. The protein is Survival of motor neuron-related-splicing factor 30 (Smndc1) of Mus musculus (Mouse).